Consider the following 228-residue polypeptide: ATP-dependent dethiobiotin synthetase BioD (228 aa).

12-17 provides a ligand contact to ATP; the sequence is EIGKTT. Residue T16 coordinates Mg(2+). K37 is a catalytic residue. S41 is a substrate binding site. Residues D54, 116–119, and 205–207 contribute to the ATP site; these read EGAG and PRL. Positions 54 and 116 each coordinate Mg(2+).

The protein belongs to the dethiobiotin synthetase family. In terms of assembly, homodimer. Mg(2+) serves as cofactor.

Its subcellular location is the cytoplasm. It catalyses the reaction (7R,8S)-7,8-diammoniononanoate + CO2 + ATP = (4R,5S)-dethiobiotin + ADP + phosphate + 3 H(+). It functions in the pathway cofactor biosynthesis; biotin biosynthesis; biotin from 7,8-diaminononanoate: step 1/2. Catalyzes a mechanistically unusual reaction, the ATP-dependent insertion of CO2 between the N7 and N8 nitrogen atoms of 7,8-diaminopelargonic acid (DAPA, also called 7,8-diammoniononanoate) to form a ureido ring. The polypeptide is ATP-dependent dethiobiotin synthetase BioD (Pseudomonas aeruginosa (strain LESB58)).